An 813-amino-acid chain; its full sequence is Polycomb group protein FERTILIZATION-INDEPENDENT SEED 2 (813 aa).

The segment at 1–27 (MARKSIRGKEVVMVSDDDDDDDDVDDD) is disordered. Positions 15–26 (SDDDDDDDDVDD) are enriched in acidic residues. Residues 134–155 (CPFCLIPCGGHEGLQLHLKSSH) form a C2H2-type zinc finger. Disordered regions lie at residues 197–216 (SPLT…DDSN), 232–261 (DLPR…SEKI), and 274–648 (ESSE…RKEL). The span at 232-246 (DLPRGTENDSTHVND) shows a compositional bias: basic and acidic residues. The stretch at 243 to 264 (HVNDDNVSSPPRAHSSEKISDI) is one A-1 repeat. Residues 243–542 (HVNDDNVSSP…HSSKKNKSTR (300 aa)) form a 12 X approximate repeat A region. One copy of the B-1 repeat lies at 265-281 (LTTTQLAIAESSEPKVP). The segment at 265–640 (LTTTQLAIAE…KAEPSEPKVT (376 aa)) is 7 X approximate repeat B. The A-2 repeat unit spans residues 282–304 (HVNDGNVSSPPRAHSSAEKNEST). Basic and acidic residues-rich tracts occupy residues 296–307 (SSAEKNESTHVN), 319–331 (HSLE…HVNE), and 344–353 (KKNESTHMND). An A-3 repeat occupies 305–327 (HVNDDDDVSSPPRAHSLEKNEST). The stretch at 328–349 (HVNEDNISSPPKAHSSKKNEST) is one A-4 repeat. An A-5 repeat occupies 350–371 (HMNDEDVSFPPRTRSSKETSDI). A B-2 repeat occupies 372–388 (LTTTQPAIVEPSEPKVR). Over residues 388–402 (RRGSRRKQLYAKRYK) the composition is skewed to basic residues. Residues 403-419 (ARETQPAIAESSEPKVL) form a B-3 repeat. Basic and acidic residues-rich tracts occupy residues 414-423 (SEPKVLHVND) and 453-462 (SEPKVPHVND). The stretch at 420 to 441 (HVNDENVSSPPEAHSLEKASDI) is one A-6 repeat. One copy of the B-4 repeat lies at 442-458 (LTTTQPAIAESSEPKVP). An A-7 repeat occupies 459–481 (HVNDENVSSTPRAHSSKKNKSTR). Positions 472–481 (HSSKKNKSTR) are enriched in basic residues. One copy of the A-8 repeat lies at 482–502 (KNVDNVPSPPKTRSSKKTSDI). The span at 501 to 512 (DILTTTQPTIAE) shows a compositional bias: polar residues. The stretch at 503 to 519 (LTTTQPTIAESSEPKVR) is one B-5 repeat. The segment covering 514–523 (SEPKVRHVND) has biased composition (basic and acidic residues). An A-9 repeat occupies 520 to 542 (HVNDDNVSSTPRAHSSKKNKSTR). The A-10 repeat unit spans residues 543 to 563 (KNDDNIPSPPKTRSSKKTSNI). The B-6 repeat unit spans residues 564-579 (LTRTQPAIAESEPKVP). Basic and acidic residues predominate over residues 574–586 (SEPKVPHVNDDKV). The A-11 repeat unit spans residues 580 to 601 (HVNDDKVSSTPRAHSSKKNKST). A compositionally biased stretch (basic residues) spans 593–602 (HSSKKNKSTH). An A-12 repeat occupies 602–623 (HKKDDNASLPPKTRSSKKTSDI). The stretch at 624-640 (LATTQPAKAEPSEPKVT) is one B-7 repeat. A VEFS-box region spans residues 648–783 (LHAERCEAKR…CAKTFHKCTT (136 aa)).

The protein belongs to the VEFS (VRN2-EMF2-FIS2-SU(Z)12) family. As to quaternary structure, probably indirectly associated with FIE and/or MEA. In plants, PcG complexes are probably composed of a member of the EZ family (CLF or MEA), FIE, and a member of the VEFS family (FIS2, VRN2 or EMF2). As to expression, weakly expressed. Expressed in late siliques.

The protein resides in the nucleus. Functionally, polycomb group (PcG) protein. PcG proteins act by forming multiprotein complexes, which are required to maintain the transcriptionally repressive state of homeotic genes throughout development. PcG proteins are not required to initiate repression, but to maintain it during later stages of development. They probably act via the methylation of histones, rendering chromatin heritably changed in its expressibility. Required to prevent the proliferation of the central cell by repressing unknown target genes before fertilization. Regulates the anteroposterior organization of the endosperm. The protein is Polycomb group protein FERTILIZATION-INDEPENDENT SEED 2 of Arabidopsis thaliana (Mouse-ear cress).